Consider the following 1392-residue polypeptide: Leucine-rich PPR motif-containing protein, mitochondrial (1392 aa).

A mitochondrion-targeting transit peptide spans 1–59 (MAALLRPARWLLGAAAAPRLPLSLRLPAGVPGRLSSVVRVAAVGSRPAAGERLSQARLY). PPR repeat units lie at residues 125-159 (LLRS…GVVY), 160-194 (DVSH…NIQP), 195-229 (NRVT…DLPI), 230-264 (TEAV…GIEP), 265-299 (GPDT…DHYF), 300-334 (MDRD…RRSI), 402-436 (HSSS…GFPI), 437-471 (RPHY…GVDP), 677-708 (VGSA…ESDM), 709-745 (VIGG…SAIL), 746-783 (DTAK…IKDA), 784-820 (TVLS…AKPS), 821-856 (SNIS…VLPR), and 953-987 (RDQM…NIIP). 3 positions are modified to N6-acetyllysine: Lys-151, Lys-186, and Lys-225. An N6-acetyllysine modification is found at Lys-291. Lys-462 is modified (N6-acetyllysine). Lys-749 is subject to N6-acetyllysine. The segment at 931–1050 (ASNQVEALEK…NCKLKKSKDA (120 aa)) is RNA-binding. Ser-1025, Ser-1026, and Ser-1028 each carry phosphoserine. PPR repeat units lie at residues 1030-1064 (GEDV…NVVF), 1065-1101 (SSET…GFTL), 1102-1136 (NDAA…KQVP), 1137-1175 (SQIA…LSKM), 1176-1210 (VFIN…QAIE), and 1315-1349 (NDKV…NLKL). The residue at position 1137 (Ser-1137) is a Phosphoserine.

As to quaternary structure, component of mRNP complexes associated with HNRPA1. Component of the complex, at least composed of LRPPRC, BECN1 and BCL2; the interactions prevent BECN1 from forming an autophagy-inducing complex with PIK3C3. Interacts with CECR2, HEBP2, MAP1S and UXT. Interacts with PPARGC1A. Interacts with FOXO1. Interacts (via N-terminus) with EIF4E; the interaction promotes association of EIF4E with 4ESE-containing mRNAs. Interacts with exportin XPO1/CRM1; interacts both alone and in complex with EIF4E and 4ESE-containing mRNAs to form an EIF4E-dependent mRNA export complex. Interacts with importin IPO8; the interaction occurs when LRPPRC is in its RNA-free form and returns LRPPRC to the nucleus for further export rounds. Interacts with BECN1. Strongly expressed in heart, liver and kidney. Weakly expressed in brain, skeletal muscle and testes.

The protein localises to the mitochondrion. Its subcellular location is the nucleus. The protein resides in the nucleoplasm. It localises to the nucleus inner membrane. It is found in the nucleus outer membrane. May play a role in RNA metabolism in both nuclei and mitochondria. In the nucleus binds to HNRPA1-associated poly(A) mRNAs and is part of nmRNP complexes at late stages of mRNA maturation which are possibly associated with nuclear mRNA export. Positively modulates nuclear export of mRNAs containing the EIF4E sensitivity element (4ESE) by binding simultaneously to both EIF4E and the 4ESE and acting as a platform for assembly for the RNA export complex. Also binds to exportin XPO1/CRM1 to engage the nuclear pore and traffic the bound mRNAs to the cytoplasm. May bind mature mRNA in the nucleus outer membrane. In mitochondria binds to poly(A) mRNA. Plays a role in translation or stability of mitochondrially encoded cytochrome c oxidase (COX) subunits. May be involved in transcription regulation. Cooperates with PPARGC1A to regulate certain mitochondrially encoded genes and gluconeogenic genes and may regulate docking of PPARGC1A to transcription factors. Seems to be involved in the transcription regulation of the multidrug-related genes MDR1 and MVP. Part of a nuclear factor that binds to the invMED1 element of MDR1 and MVP gene promoters. Binds single-stranded DNA. Required for maintaining mitochondrial potential. Suppresses the initiation of basal levels of autophagy and mitophagy by sustaining BCL2 levels. This Mus musculus (Mouse) protein is Leucine-rich PPR motif-containing protein, mitochondrial (Lrpprc).